A 527-amino-acid chain; its full sequence is Pentatricopeptide repeat-containing protein At5g41170, mitochondrial (527 aa).

The N-terminal 35 residues, 1–35, are a transit peptide targeting the mitochondrion; that stretch reads MAMRFFQLHRNRLVKGNSGKALSFSRLLDLSFWVR. PPR repeat units lie at residues 36 to 70, 71 to 105, 106 to 140, 141 to 175, 176 to 210, 211 to 245, 246 to 280, 281 to 315, 316 to 350, 351 to 385, 386 to 420, 424 to 458, 459 to 493, and 494 to 527; these read AFCN…RPLP, SIID…GVSH, DLYT…GFEP, DIVT…GIKP, DVVM…GIRP, DVVM…KIKP, DVIT…SIAP, NIFT…GCFP, DVVA…GLTG, NTIT…GVPP, NIRT…EMDG, NIWT…EMDI, GIIT…GVKP, and NVVT…DGVS.

This sequence belongs to the PPR family. P subfamily.

It is found in the mitochondrion. This is Pentatricopeptide repeat-containing protein At5g41170, mitochondrial from Arabidopsis thaliana (Mouse-ear cress).